A 310-amino-acid polypeptide reads, in one-letter code: MQSARNEQRGTGPESPHAASPTEGFEVLLITGMSGAGRSHAAHSIEDMGWYVVDNMPPKLLEPMVDMMTASKSGFHKLAAVIDVRSRDYFMDLSSVLSHLDDLGLKTRILFLDADDNVLVKRFESVRRPHPLQQGNRLIDGIHEERRLLENLEERADIVINTSKLSIHQLSTKLYEALTGNGPTTVSVHIFSFGFKYGIPIDADFVADVRFLPNPYWVPQLRELNGHDAPVSEYVLSNDKATQFLDAYEKAIEIAIQGYAQEDKHYVTIAIGCTGGQHRSVAMSEALASRLRSHGLSVSVSARELDRKTQ.

The segment at 1 to 21 is disordered; sequence MQSARNEQRGTGPESPHAASP. Residue 32–39 participates in ATP binding; sequence GMSGAGRS. 83 to 86 provides a ligand contact to GTP; the sequence is DVRS.

This sequence belongs to the RapZ-like family.

In terms of biological role, displays ATPase and GTPase activities. In Bifidobacterium animalis subsp. lactis (strain AD011), this protein is Nucleotide-binding protein BLA_1368.